The chain runs to 1464 residues: DNA polymerase III PolC-type (1464 aa).

Positions 426–582 (YVVFDVETTG…YDAEATGRLL (157 aa)) constitute an Exonuclease domain.

Belongs to the DNA polymerase type-C family. PolC subfamily.

The protein resides in the cytoplasm. The enzyme catalyses DNA(n) + a 2'-deoxyribonucleoside 5'-triphosphate = DNA(n+1) + diphosphate. Its function is as follows. Required for replicative DNA synthesis. This DNA polymerase also exhibits 3' to 5' exonuclease activity. This Streptococcus thermophilus (strain ATCC BAA-250 / LMG 18311) protein is DNA polymerase III PolC-type.